Reading from the N-terminus, the 508-residue chain is uncharacterized protein (508 aa).

A run of 12 helical transmembrane segments spans residues I65–V87, W104–L124, F136–I156, V160–W180, V192–A212, L224–V244, T292–F312, L333–I353, M357–A377, L384–I404, T416–F436, and T450–W470.

It belongs to the major facilitator superfamily. Allantoate permease family.

It is found in the endoplasmic reticulum. The protein resides in the golgi apparatus. Its subcellular location is the membrane. This is an uncharacterized protein from Schizosaccharomyces pombe (strain 972 / ATCC 24843) (Fission yeast).